The primary structure comprises 307 residues: MTRRYRSNPAVIPVPFPVPLPITEQTTPQIPPPSPTAIQFTCFGIPIYQSPSVPKSYAVVNVVSHNVFYGCSGDTCFEGVEGVDIRSFVFLPINLFAYIFACEAPLETQETQGTQTIIVITESKPLYNTDKVTQVNQIVQGQFTDKSEVLSINYGDVNVTDINYLSFIQTGLQIATKFTLPLCDRISIFKTPFELAVAKTLYLEIVGKERPELTAILDFMQSLDAEISGIIETDYQEIEPNGKLTDVISKPIQNQLPLQILPGLILGESYQFNTNNILMQTEIETEIGEQLYTDGITFETELTVKQS.

This is an uncharacterized protein from Acidianus hospitalis (AFV-1).